The sequence spans 119 residues: Immunoglobulin lambda variable 2-11 (119 aa).

Positions 1–19 are cleaved as a signal peptide; the sequence is MAWALLLLSLLTQGTGSWA. Gln20 is subject to Pyrrolidone carboxylic acid. Residues 20–44 form a framework-1 region; it reads QSALTQPRSVSGSPGQSVTISCTGT. Positions 20-119 constitute an Ig-like domain; the sequence is QSALTQPRSV…CSYAGSYTFH (100 aa). Cys41 and Cys109 are disulfide-bonded. Residues 45-53 form a complementarity-determining-1 region; sequence SSDVGGYNY. The tract at residues 54–70 is framework-2; the sequence is VSWYQQHPGKAPKLMIY. Residues 71–73 form a complementarity-determining-2 region; sequence DVS. Positions 74–109 are framework-3; the sequence is KRPSGVPDRFSGSKSGNTASLTISGLQAEDEADYYC. The tract at residues 110–119 is complementarity-determining-3; that stretch reads CSYAGSYTFH.

Immunoglobulins are composed of two identical heavy chains and two identical light chains; disulfide-linked.

It is found in the secreted. The protein localises to the cell membrane. In terms of biological role, v region of the variable domain of immunoglobulin light chains that participates in the antigen recognition. Immunoglobulins, also known as antibodies, are membrane-bound or secreted glycoproteins produced by B lymphocytes. In the recognition phase of humoral immunity, the membrane-bound immunoglobulins serve as receptors which, upon binding of a specific antigen, trigger the clonal expansion and differentiation of B lymphocytes into immunoglobulins-secreting plasma cells. Secreted immunoglobulins mediate the effector phase of humoral immunity, which results in the elimination of bound antigens. The antigen binding site is formed by the variable domain of one heavy chain, together with that of its associated light chain. Thus, each immunoglobulin has two antigen binding sites with remarkable affinity for a particular antigen. The variable domains are assembled by a process called V-(D)-J rearrangement and can then be subjected to somatic hypermutations which, after exposure to antigen and selection, allow affinity maturation for a particular antigen. This chain is Immunoglobulin lambda variable 2-11, found in Homo sapiens (Human).